The primary structure comprises 300 residues: Zinc finger CCCH-type antiviral protein 1-like (300 aa).

N-acetylalanine is present on A2. Residues 252-263 (NTDNSSPSTEHS) are compositionally biased toward polar residues. A disordered region spans residues 252–300 (NTDNSSPSTEHSQGLEKQGVHAAGAAEAGPLASVPAQSAKKPCPVSCEK). The span at 271–283 (VHAAGAAEAGPLA) shows a compositional bias: low complexity.

This chain is Zinc finger CCCH-type antiviral protein 1-like (ZC3HAV1L), found in Homo sapiens (Human).